Consider the following 928-residue polypeptide: Neuropilin-1 (928 aa).

The N-terminal stretch at methionine 1 to alanine 21 is a signal peptide. The Extracellular portion of the chain corresponds to serine 22–proline 860. 3 disulfide bridges follow: cysteine 27/cysteine 54, cysteine 82/cysteine 104, and cysteine 147/cysteine 173. CUB domains are found at residues cysteine 27–phenylalanine 141 and cysteine 147–valine 265. An N-linked (GlcNAc...) asparagine glycan is attached at asparagine 150. Ca(2+) is bound by residues glutamate 195, aspartate 209, and aspartate 250. The cysteines at positions 206 and 228 are disulfide-linked. 3 N-linked (GlcNAc...) asparagine glycosylation sites follow: asparagine 261, asparagine 300, and asparagine 523. Disulfide bonds link cysteine 275-cysteine 424 and cysteine 431-cysteine 584. F5/8 type C domains lie at cysteine 275–cysteine 424 and cysteine 431–cysteine 584. Serine 613 carries O-linked (Xyl...) (chondroitin sulfate) serine; alternate glycosylation. O-linked (Xyl...) (heparan sulfate) serine; alternate glycosylation is present at serine 613. A disordered region spans residues glycine 624–threonine 645. The segment covering alanine 625–valine 635 has biased composition (polar residues). The region spanning histidine 646–alanine 812 is the MAM domain. A glycan (O-linked (Xyl...) (chondroitin sulfate) serine) is linked at serine 834. N-linked (GlcNAc...) asparagine glycosylation occurs at asparagine 844. A helical transmembrane segment spans residues isoleucine 861–leucine 883. At tyrosine 884–serine 928 the chain is on the cytoplasmic side.

This sequence belongs to the neuropilin family. In terms of assembly, homodimer, and heterodimer. In terms of tissue distribution, retinal ganglion cells and visual center neurons.

The protein resides in the mitochondrion membrane. It localises to the cell membrane. In terms of biological role, receptor involved in the development of the cardiovascular system, in angiogenesis, in the formation of certain neuronal circuits and in organogenesis outside the nervous system. Mediates the chemorepulsant activity of semaphorins. Binding to VEGFA initiates a signaling pathway needed for motor neuron axon guidance and cell body migration, including for the caudal migration of facial motor neurons from rhombomere 4 to rhombomere 6 during embryonic development. Regulates mitochondrial iron transport via interaction. This Xenopus laevis (African clawed frog) protein is Neuropilin-1 (nrp1).